The sequence spans 154 residues: Large ribosomal subunit protein bL17 (154 aa).

The disordered stretch occupies residues 125–154 (AASQKSSKQDRAKRVQGSKKNVDAVAESAE).

Belongs to the bacterial ribosomal protein bL17 family. As to quaternary structure, part of the 50S ribosomal subunit. Contacts protein L32.

The sequence is that of Large ribosomal subunit protein bL17 from Chlorobium chlorochromatii (strain CaD3).